Reading from the N-terminus, the 418-residue chain is N-acetylglucosamine-6-phosphate deacetylase (418 aa).

Residue glutamate 154 participates in a divalent metal cation binding. 165–166 (CH) is a substrate binding site. 2 residues coordinate a divalent metal cation: histidine 223 and histidine 244. Residues 247 to 248 (NA), arginine 255, and 281 to 284 (DGIH) contribute to the substrate site. The Proton donor/acceptor role is filled by aspartate 306. Substrate is bound at residue 340–342 (TAG).

It belongs to the metallo-dependent hydrolases superfamily. NagA family. Requires a divalent metal cation as cofactor.

The enzyme catalyses N-acetyl-D-glucosamine 6-phosphate + H2O = D-glucosamine 6-phosphate + acetate. This chain is N-acetylglucosamine-6-phosphate deacetylase, found in Caenorhabditis elegans.